Here is a 311-residue protein sequence, read N- to C-terminus: Pyrimidine-specific ribonucleoside hydrolase RihA (311 aa).

His-240 is an active-site residue.

The protein belongs to the IUNH family. RihA subfamily.

Functionally, hydrolyzes with equal efficiency cytidine or uridine to ribose and cytosine or uracil, respectively. The protein is Pyrimidine-specific ribonucleoside hydrolase RihA of Escherichia coli O127:H6 (strain E2348/69 / EPEC).